The following is a 335-amino-acid chain: Acyl-CoA Delta(11) desaturase (335 aa).

Transmembrane regions (helical) follow at residues 39-59, 64-84, and 98-118; these read LLTFGYWHIAGLYGLYLCFTS, TIILALILNEMAILGITAGAH, and LQIILIIFNSLSFQNSAIHWI. Positions 84 to 89 match the Histidine box-1 motif; it reads HRLWAH. The Histidine box-2 motif lies at 121 to 125; the sequence is HRMHH. Transmembrane regions (helical) follow at residues 182 to 202 and 213 to 235; these read AIPFIGMICFVLPTIIPMYFW and TMLRYVFSLNSIFLVNSAAHLYG. The Histidine box-3 motif lies at 261–265; sequence HNYHH. Positions 312-335 are disordered; it reads MKRTGDGTDVSGQKYSCESSEVLQ. The span at 321 to 335 shows a compositional bias: polar residues; that stretch reads VSGQKYSCESSEVLQ.

Belongs to the fatty acid desaturase type 1 family. It depends on Fe cation as a cofactor. Detected in pheromone gland.

It is found in the membrane. It catalyses the reaction an 11,12-saturated fatty acyl-CoA + 2 Fe(II)-[cytochrome b5] + O2 + 2 H(+) = an (11Z)-Delta(11)-fatty acyl-CoA + 2 Fe(III)-[cytochrome b5] + 2 H2O. Functionally, catalyzes the formation of Delta(11) fatty acyl precursors in the pheromone gland, with a preference for myristic acid. This is Acyl-CoA Delta(11) desaturase from Choristoneura rosaceana (Oblique banded leafroller).